We begin with the raw amino-acid sequence, 289 residues long: Serine/threonine-protein phosphatase Pgam5, mitochondrial (289 aa).

Residues leucine 7 to leucine 23 form a helical membrane-spanning segment.

Belongs to the phosphoglycerate mutase family. BPG-dependent PGAM subfamily. Interacts with Pk92B/ASK1.

It localises to the mitochondrion outer membrane. It carries out the reaction O-phospho-L-seryl-[protein] + H2O = L-seryl-[protein] + phosphate. The enzyme catalyses O-phospho-L-threonyl-[protein] + H2O = L-threonyl-[protein] + phosphate. Its function is as follows. Displays phosphatase activity for serine/threonine residues, and dephosphorylates and activates Pk92B kinase. Has apparently no phosphoglycerate mutase activity. This Drosophila ananassae (Fruit fly) protein is Serine/threonine-protein phosphatase Pgam5, mitochondrial.